A 151-amino-acid chain; its full sequence is Small ribosomal subunit protein uS15y (151 aa).

It belongs to the universal ribosomal protein uS15 family.

The sequence is that of Small ribosomal subunit protein uS15y from Oryza sativa subsp. japonica (Rice).